Here is a 955-residue protein sequence, read N- to C-terminus: MTRKNTTTNPWAKFHGPNLGYVIEQYDLYVTGAGSVDPELQELFEIFGAPSFQDDVVTGDNTATHFSPQNTGNIEKILKVVQLVEQIRSFGHTLAHINPMEDAANGQSLLERAMNELSDADLKAIPAKTVWQDAPEGIHTALDVIHRLKEVYTQSLAYEFSHIQDSEERAWLHQMVESNSLRQPLSNQKRTALLKRLTAVEGFEQFLHKTFVGQKRFSIEGVDMLVPVLDEIVLEGAKNGVEDVMIGMAHRGRLSVLAHVLEKPYSHMFAEFKHAKIEGAVANSGWTGDVKYHLGREQVVSNEEVSTRVTLANNPSHLEFVNPVVEGFARAAQENRKKSGLPEQDTSKSFVILVHGDAAFPGQGIVSETLNLSRLNAYQTGGTIHVIANNAVGFTTDSYDSRSTKYSSDLAKGFDIPIVHVNADDPEACLAAANLAIQYRMLFKKDFLIDLIGYRRYGHNEMDDPAVTQPQVYKKIKNHPTVRAIYADQLQAAGVLNADEIETITQFTQEQLKSDYAQVPPADTSDATIHVKVPDVVAKGIQSIDTGVELDSLRAINEGLLSWPEGFNVYPKVKKILERRKDALEENGKIEWALAESLAFASILQEGTPIRLTGQDSQRGTFAHRHIVLHDTDTNETYSPLHRLPNINASFSVHNSPLSEAAVVGYEYGYNVFAPETLVMWEAQYGDFSNTAQALFDQYVSAGRAKWGQKSGLVLLLPHGYEGQGPEHSSARPERFLQLAAENNWTVANLTSAAQYFHILRRQASILGTEAVRPLVLMTPKSLLRHPLTLSTASQLSEGRFQPALEQENLGTKPNKVKRLVLSTGKMAIDLAAEIESGKHEYNLDEIHIVRIEQLYPFPAEKVQSIIKRFKNLEEIIWVQEEPRNMGAWHYMAPILFELAGDKVKTGYIGRPDRSSPSGGDPFAHKAEQELIVSHALDVKYNFRQDKLEIEVFSN.

The protein belongs to the alpha-ketoglutarate dehydrogenase family. In terms of assembly, homodimer. Part of the 2-oxoglutarate dehydrogenase (OGDH) complex composed of E1 (2-oxoglutarate dehydrogenase), E2 (dihydrolipoamide succinyltransferase) and E3 (dihydrolipoamide dehydrogenase); the complex contains multiple copies of the three enzymatic components (E1, E2 and E3). The cofactor is thiamine diphosphate.

The enzyme catalyses N(6)-[(R)-lipoyl]-L-lysyl-[protein] + 2-oxoglutarate + H(+) = N(6)-[(R)-S(8)-succinyldihydrolipoyl]-L-lysyl-[protein] + CO2. E1 component of the 2-oxoglutarate dehydrogenase (OGDH) complex which catalyzes the decarboxylation of 2-oxoglutarate, the first step in the conversion of 2-oxoglutarate to succinyl-CoA and CO(2). This Bacillus cereus (strain 03BB102) protein is 2-oxoglutarate dehydrogenase E1 component.